We begin with the raw amino-acid sequence, 291 residues long: Small ribosomal subunit biogenesis GTPase RsgA (291 aa).

The CP-type G domain occupies 63-221 (QNELKRPPVS…VADTPGFSAL (159 aa)). GTP-binding positions include 112–115 (TKKD) and 164–172 (GQSGVGKST). 4 residues coordinate Zn(2+): cysteine 245, cysteine 250, histidine 252, and cysteine 258.

This sequence belongs to the TRAFAC class YlqF/YawG GTPase family. RsgA subfamily. As to quaternary structure, monomer. Associates with 30S ribosomal subunit, binds 16S rRNA. Zn(2+) serves as cofactor.

The protein localises to the cytoplasm. Its function is as follows. One of several proteins that assist in the late maturation steps of the functional core of the 30S ribosomal subunit. Helps release RbfA from mature subunits. May play a role in the assembly of ribosomal proteins into the subunit. Circularly permuted GTPase that catalyzes slow GTP hydrolysis, GTPase activity is stimulated by the 30S ribosomal subunit. In Staphylococcus carnosus (strain TM300), this protein is Small ribosomal subunit biogenesis GTPase RsgA.